A 1708-amino-acid chain; its full sequence is Clathrin heavy chain 1 (1708 aa).

Positions 1 to 492 are globular terminal domain; the sequence is MAAANAPIAM…VDNDLALKIY (492 aa). 7 WD40-like repeat regions span residues 25–67, 68–113, 114–155, 156–205, 206–270, 271–314, and 315–343; these read FVTF…RPIT, ADSA…MPEQ, VVFW…ANLA, NNQI…QALE, AHAA…PDFQ, DDFP…ISPD, and PIFLTAESSASGGFYAINRRGQVLHATVN. Residues 462–478 are binding site for the uncoating ATPase, involved in lattice disassembly; it reads ENWLAEDKLECSEELGD. Residues 493–536 form a flexible linker region; it reads IKARATPKVVAAFAERREFDKILIYSKQVGYTPDYLFLLQTILR. The distal segment stretch occupies residues 537–648; that stretch reads TDPQGAVNFA…RALQHYTELP (112 aa). Positions 537-1708 are heavy chain arm; it reads TDPQGAVNFA…AYGMPPMGSY (1172 aa). CHCR repeat units lie at residues 551 to 697, 700 to 842, 847 to 986, 993 to 1138, 1142 to 1283, 1288 to 1434, and 1437 to 1580; these read QMEG…QIVV, AKEY…PEDF, ILSV…QLID, LPES…VSEA, FIRA…FRLA, LNII…DLIN, and LNVL…KECF. Positions 653–1708 are proximal segment; sequence VMVNTHAIEP…AYGMPPMGSY (1056 aa). Residues 1227-1536 form an involved in binding clathrin light chain region; that stretch reads AAKIIYAFIS…YIYKKAGRWK (310 aa). The segment at 1564–1708 is trimerization; that stretch reads SEDLLVYFIE…AYGMPPMGSY (145 aa).

This sequence belongs to the clathrin heavy chain family. As to quaternary structure, clathrin triskelions, composed of 3 heavy chains and 3 light chains, are the basic subunits of the clathrin coat.

The protein resides in the cytoplasmic vesicle membrane. It localises to the membrane. It is found in the coated pit. Functionally, clathrin is the major protein of the polyhedral coat of coated pits and vesicles. In Oryza sativa subsp. japonica (Rice), this protein is Clathrin heavy chain 1.